The chain runs to 216 residues: 3-isopropylmalate dehydratase small subunit (216 aa).

It belongs to the LeuD family. LeuD type 1 subfamily. Heterodimer of LeuC and LeuD.

It carries out the reaction (2R,3S)-3-isopropylmalate = (2S)-2-isopropylmalate. Its pathway is amino-acid biosynthesis; L-leucine biosynthesis; L-leucine from 3-methyl-2-oxobutanoate: step 2/4. In terms of biological role, catalyzes the isomerization between 2-isopropylmalate and 3-isopropylmalate, via the formation of 2-isopropylmaleate. The chain is 3-isopropylmalate dehydratase small subunit from Psychrobacter sp. (strain PRwf-1).